Here is a 502-residue protein sequence, read N- to C-terminus: AMP phosphorylase (502 aa).

Residues Gly-168, Ser-195–Ser-200, and Thr-204 each bind AMP. Residue Asp-257 is the Proton donor of the active site. 2 residues coordinate AMP: Ser-265 and Lys-289.

It belongs to the thymidine/pyrimidine-nucleoside phosphorylase family. Type 2 subfamily.

It catalyses the reaction AMP + phosphate = alpha-D-ribose 1,5-bisphosphate + adenine. The enzyme catalyses CMP + phosphate = cytosine + alpha-D-ribose 1,5-bisphosphate. The catalysed reaction is UMP + phosphate = alpha-D-ribose 1,5-bisphosphate + uracil. Catalyzes the conversion of AMP and phosphate to adenine and ribose 1,5-bisphosphate (R15P). Exhibits phosphorylase activity toward CMP and UMP in addition to AMP. Functions in an archaeal AMP degradation pathway, together with R15P isomerase and RubisCO. This is AMP phosphorylase from Hyperthermus butylicus (strain DSM 5456 / JCM 9403 / PLM1-5).